Consider the following 110-residue polypeptide: uncharacterized protein (110 aa).

3 helical membrane-spanning segments follow: residues 4 to 26, 46 to 68, and 72 to 91; these read LVGGGLMIIAGILIKLFPPKSIN, ANRYSASLMILSGLVIAGMGLLL, and LFILQLILLIAACVITFMLT.

It localises to the cell membrane. This is an uncharacterized protein from Bacillus subtilis (strain 168).